Reading from the N-terminus, the 709-residue chain is Mucin-20 (709 aa).

The first 25 residues, 1 to 25, serve as a signal peptide directing secretion; sequence MGCLWGLALPLFFFCWEVGVSGSSA. Residues 57 to 69 are compositionally biased toward polar residues; it reads TQTLSAETSSRAS. 2 disordered regions span residues 57 to 92 and 170 to 403; these read TQTLSAETSSRASTPAGPIPEAETRGAKRISPARET and KGLS…WSPG. Residues 78-92 show a composition bias toward basic and acidic residues; sequence AETRGAKRISPARET. Low complexity-rich tracts occupy residues 173 to 182, 190 to 199, 209 to 218, 228 to 237, 247 to 256, 266 to 275, 285 to 294, 304 to 313, 323 to 332, 342 to 351, 361 to 370, and 380 to 389; these read SSESSASSDS and SRASESSASS. 11 repeat units span residues 173–192, 193–211, 212–230, 231–249, 250–268, 269–287, 288–306, 307–325, 326–344, 345–363, and 364–382. A 12 X 20 AA approximate tandem repeats of S-S-E-S-S-A-S-S-D-S-P-H-P-V-I-T-P-S-R-A region spans residues 173-400; sequence SSESSASSDS…GPHPVITPSW (228 aa). The 12; approximate repeat unit spans residues 383–400; that stretch reads SESSASSDGPHPVITPSW. N-linked (GlcNAc...) asparagine glycosylation is present at N423. 2 disordered regions span residues 434–515 and 583–657; these read SSIP…APGA and NFTP…VSAG. The tract at residues 450–656 is involved in oligomerization; the sequence is VKASSTSDPP…RTRPTTDVSA (207 aa). Positions 474–489 are enriched in polar residues; sequence VTASAETLSTAGTTES. Residues 613–652 are compositionally biased toward low complexity; the sequence is TTTNSSRGTNSTLAKITTSAKTTMKPPTATPTTARTRPTT. N616 and N622 each carry an N-linked (GlcNAc...) asparagine glycan. The segment at 657–709 is interaction with MET; that stretch reads GENGGFLLLRLSVASPEDLTDPRVAERLMQQLHRELHAHAPHFQVSLLRVRRG.

In terms of assembly, interacts with MET; oligomerization increases affinity for MET. Highly expressed in kidney, moderately in placenta, lung, prostate, liver, and digestive system. In the kidney, localized in the proximal tubules but not in the glomerulus or distal tubules. Detected in most of the male urogenital tract epithelia, with the exception of epididymis.

The protein resides in the secreted. Its subcellular location is the apical cell membrane. The protein localises to the basolateral cell membrane. It localises to the cell projection. It is found in the microvillus membrane. May regulate MET signaling cascade. Seems to decrease hepatocyte growth factor (HGF)-induced transient MAPK activation. Blocks GRB2 recruitment to MET thus suppressing the GRB2-RAS pathway. Inhibits HGF-induced proliferation of MMP1 and MMP9 expression. The sequence is that of Mucin-20 (MUC20) from Homo sapiens (Human).